The following is a 368-amino-acid chain: DNA replication and repair protein RecF (368 aa).

Residue 30–37 (GKNGTGKT) coordinates ATP.

The protein belongs to the RecF family.

Its subcellular location is the cytoplasm. Functionally, the RecF protein is involved in DNA metabolism; it is required for DNA replication and normal SOS inducibility. RecF binds preferentially to single-stranded, linear DNA. It also seems to bind ATP. This is DNA replication and repair protein RecF from Chloroherpeton thalassium (strain ATCC 35110 / GB-78).